A 147-amino-acid chain; its full sequence is Large ribosomal subunit protein bL9 (147 aa).

It belongs to the bacterial ribosomal protein bL9 family.

Binds to the 23S rRNA. The chain is Large ribosomal subunit protein bL9 from Marinomonas sp. (strain MWYL1).